Consider the following 142-residue polypeptide: Small ribosomal subunit protein bS6 (142 aa).

Basic and acidic residues predominate over residues 110-133 (NKKPSHAKEKHEKTEHTHSHHTEE). Residues 110–142 (NKKPSHAKEKHEKTEHTHSHHTEEAESVGSHSE) are disordered.

Belongs to the bacterial ribosomal protein bS6 family.

Its function is as follows. Binds together with bS18 to 16S ribosomal RNA. In Helicobacter pylori (strain ATCC 700392 / 26695) (Campylobacter pylori), this protein is Small ribosomal subunit protein bS6 (rpsF).